An 84-amino-acid chain; its full sequence is Small ribosomal subunit protein bS16 (84 aa).

The protein belongs to the bacterial ribosomal protein bS16 family.

The chain is Small ribosomal subunit protein bS16 from Burkholderia mallei (strain NCTC 10247).